The sequence spans 565 residues: CTP synthase (565 aa).

An amidoligase domain region spans residues 1 to 272; sequence MARPKNVKHI…DKRVLKKLGI (272 aa). Serine 18 serves as a coordination point for CTP. A UTP-binding site is contributed by serine 18. 19-24 provides a ligand contact to ATP; sequence SLGKGI. Tyrosine 59 contacts L-glutamine. Residue aspartate 76 participates in ATP binding. Positions 76 and 146 each coordinate Mg(2+). CTP-binding positions include 153–155, 193–198, and lysine 229; these read DIE and KTKPTQ. Residues 193–198 and lysine 229 each bind UTP; that span reads KTKPTQ. A Glutamine amidotransferase type-1 domain is found at 299 to 543; sequence TIAVCGKYTE…VAAAKAFAFG (245 aa). L-glutamine is bound at residue glycine 363. Residue cysteine 390 is the Nucleophile; for glutamine hydrolysis of the active site. Residues 391-394, glutamate 414, and arginine 471 contribute to the L-glutamine site; that span reads LGMQ. Active-site residues include histidine 516 and glutamate 518.

It belongs to the CTP synthase family. As to quaternary structure, homotetramer.

The enzyme catalyses UTP + L-glutamine + ATP + H2O = CTP + L-glutamate + ADP + phosphate + 2 H(+). It catalyses the reaction L-glutamine + H2O = L-glutamate + NH4(+). The catalysed reaction is UTP + NH4(+) + ATP = CTP + ADP + phosphate + 2 H(+). It participates in pyrimidine metabolism; CTP biosynthesis via de novo pathway; CTP from UDP: step 2/2. With respect to regulation, allosterically activated by GTP, when glutamine is the substrate; GTP has no effect on the reaction when ammonia is the substrate. The allosteric effector GTP functions by stabilizing the protein conformation that binds the tetrahedral intermediate(s) formed during glutamine hydrolysis. Inhibited by the product CTP, via allosteric rather than competitive inhibition. Catalyzes the ATP-dependent amination of UTP to CTP with either L-glutamine or ammonia as the source of nitrogen. Regulates intracellular CTP levels through interactions with the four ribonucleotide triphosphates. The chain is CTP synthase from Chlorobium phaeobacteroides (strain BS1).